The sequence spans 4687 residues: Plectin (4687 aa).

A globular 1 region spans residues 1 to 1473 (MVAGMLMPLD…SELTTLTSQY (1473 aa)). Arginine 21 bears the Phosphoserine mark. Position 26 is a phosphotyrosine (valine 26). The disordered stretch occupies residues 111-158 (RRRSPHVQTMQGPLGCPPKRGPLPAEDPAREERQVYRRKEREEGAPET). Basic and acidic residues predominate over residues 137–154 (DPAREERQVYRRKEREEG). Positions 181–406 (DERDRVQKKT…YVSSLYDAMP (226 aa)) are actin-binding. Calponin-homology (CH) domains follow at residues 185–288 (RVQK…LHFK) and 301–406 (MTAK…DAMP). Residues 648–722 (LQSTQRRPEL…ERARNDESQL (75 aa)) form a Spectrin 1 repeat. A Phosphoserine modification is found at serine 723. Spectrin repeat units lie at residues 743 to 827 (KLLN…REDH) and 840 to 933 (LQTQ…AIVQ). The residue at position 818 (threonine 818) is a Phosphothreonine. The 58-residue stretch at 944–1001 (RGHVPLLAVCDYKQVEVTVHKGDQCQLVGPAQPFHWKVLSSSGSEAAVPSVCFLVPPP) folds into the SH3 domain. A Phosphoserine modification is found at serine 1050. One copy of the Spectrin 4 repeat lies at 1318 to 1418 (RERVTQLLER…QKFAKQYINA (101 aa)). Position 1438 is a phosphoserine (serine 1438). Coiled coils occupy residues 1472-1692 (QYIK…ERWL) and 1724-2760 (SFAE…TSQA). A central fibrous rod domain region spans residues 1474-2758 (IKFISETLRR…LAHSEEIATS (1285 aa)). The segment at 1623-1647 (EEAEAQKRQAQEEAERLRRQVQDES) is disordered. Serine 1724 carries the post-translational modification Phosphoserine. Lysine 1728 carries the post-translational modification N6-acetyllysine. 5 disordered regions span residues 1741–1764 (VTVTQLREEAERRAQQQAEAERAR), 1796–1846 (SLAQ…GTAQ), 2096–2139 (EDTM…AEEE), 2164–2188 (LRERAEQESARQLQLAQEAAQKRLQ), and 2218–2307 (RLRS…DAEM). Basic and acidic residues-rich tracts occupy residues 1801-1839 (DAEKQKEEAEREARRRGKAEEQAVRQRELAEQELEKQRQ), 2096-2111 (EDTMRSKELAEQEAAR), and 2119-2131 (EEQRRREAEERVQ). A compositionally biased stretch (low complexity) spans 2173 to 2182 (ARQLQLAQEA). A compositionally biased stretch (basic and acidic residues) spans 2218–2261 (RLRSEAEAARRAAEEAEEAREQAEREAAQSRKQVEEAERLKQSA). Residues 2262–2275 (EEQAQAQAQAQAAA) show a composition bias toward low complexity. Residues 2276-2291 (EKLRKEAEQEAARRAQ) show a composition bias toward basic and acidic residues. At serine 2634 the chain carries Phosphoserine. Lysine 2639 carries the N6-acetyllysine modification. A disordered region spans residues 2671-2710 (QEEQQRQQQQMEQEKQELVASMEEARRRQREAEEGVRRKQ). Over residues 2682-2710 (EQEKQELVASMEEARRRQREAEEGVRRKQ) the composition is skewed to basic and acidic residues. The interval 2759 to 4687 (QAAATKALPN…SLGGPESAVA (1929 aa)) is globular 2. Residue serine 2777 is modified to Phosphoserine. Tyrosine 2784 is subject to Phosphotyrosine. Plectin repeat units lie at residues 2791–2828 (QKVPAQQLQEAGILSMEELQRLTQGHTTVAELTQREDV), 2829–2866 (RHYLKGGSSIAGLLLKPTNEKLSVYTALQRQLLSPGTA), 2867–2904 (LILLEAQAASGFLLDPVRNRRLTVNEAVKEGVVGPELH), 2905–2942 (HKLLSAERAVTGYKDPYTGEQISLFQAMKKDLIVRDHG), 2943–2980 (IRLLEAQIATGGIIDPVHSHRVPVDVAYQRGYFDEEMN), and 2984–3018 (ADPSDDTKGFFDPNTHENLTYLQLLERCVEDPETG). Serine 2805 carries the post-translational modification Phosphoserine. Residue threonine 2889 is modified to Phosphothreonine. Tyrosine 3036 carries the phosphotyrosine modification. Lysine 3056 and lysine 3094 each carry N6-acetyllysine. 6 Plectin repeats span residues 3119–3156 (ALVPAAELLDSGVISHEVYQQLQRGERSVREVAEADEV), 3157–3194 (RQALRGTSVIAGVWLEEAGQKLSIYEALRRDLLQPEVA), 3195–3232 (VALLEAQAGTGHIIDPATSARLTVDEAVRAGLVGPEMH), 3233–3270 (EKLLSAEKAVTGYRDPYSGQSVSLFQALKKGLIPREQG), 3271–3308 (LRLLDAQLSTGGIVDPSKSHRVPLDVAYARGYLDKETN), and 3311–3346 (LTSPRDDARVYLDPSTREPVTYSQLQQRCRSDQLTG). Tyrosine 3365 bears the Phosphotyrosine mark. Lysine 3423 bears the N6-acetyllysine mark. Plectin repeat units follow at residues 3488 to 3525 (RTLLQGSGCLAGIYLEDSKEKVTIYEAMRRGLLRASTA), 3526 to 3563 (TLLLEAQAATGFLVDPVRNQRLYVHEAVKAGVVGPELH), 3564 to 3601 (EKLLSAEKAVTGYKDPYSGSTISLFQAMKKGLVLRDHA), 3602 to 3639 (IRLLEAQIATGGIIDPVHSHRLPVDVAYQRGYFDEEMN), and 3643 to 3677 (ADPSDDTKGFFDPNTHENLTYLQLLERCVEDPETG). Serine 3583 carries the post-translational modification Phosphoserine. Threonine 3788 carries the post-translational modification Phosphothreonine. Tyrosine 3793 is subject to Phosphotyrosine. Plectin repeat units follow at residues 3823–3860 (WRYLYGTGSVAGVYLPGSRQTLTIYQALKKGLLSAEVA), 3861–3898 (RLLLEAQAATGFLLDPVKGERLTVDEAVRKGLVGPELH), 3899–3936 (DRLLSAERAVTGYRDPYTEQPISLFQAMKKELIPAEEA), 3937–3974 (LRLLDAQLATGGIVDPRLGFHLPLEVAYQRGYLNKDTH), and 3978–4011 (SEPSEVRSYVDPSTDERLSYTQLLKRCRRDDNSG). Threonine 4033 is subject to Phosphothreonine. Serine 4057 is subject to Phosphoserine. 6 Plectin repeats span residues 4066 to 4103 (QKFLEGTSCIAGVFVDATKERLSVYQAMKKGIIRPGTA), 4104 to 4141 (FELLEAQAATGYVIDPIKGLKLTVEEAVRMGIVGPEFK), 4142 to 4179 (DKLLSAERAVTGYKDPYSGKLISLFQAMKKGLILKDHG), 4180 to 4217 (IRLLEAQIATGGIIDPEESHRLPVEVAYKRGLFDEEMN), 4221 to 4255 (TDPSDDTKGFFDPNTEENLTYLQLMERCITDPQTG), and 4268 to 4308 (RKTS…HQTY). The tract at residues 4253–4303 (QTGLCLLPLKEKKRERKTSSKSSVRKRRVVIVDPETGKEMSVYEAYRKGLI) is binding to intermediate filaments. Residues serine 4385, serine 4387, serine 4388, serine 4389, serine 4392, serine 4393, serine 4394, and serine 4395 each carry the phosphoserine modification. Residue tyrosine 4396 is modified to Phosphotyrosine. Phosphoserine is present on residues serine 4399 and serine 4409. Plectin repeat units lie at residues 4411-4448 (SDPTEETGPVAGILDTETLEKVSITEAMHRNLVDNITG), 4449-4486 (QRLLEAQACTGGIIDPSTGERFPVTEAVNKGLVDKIMV), 4487-4524 (DRINLAQKAFCGFEDPRTKTKMSAAQALKKGWLYYEAG), 4525-4562 (QRFLEVQYLTGGLIEPDTPGRVSLDEALQRGTVDARTA), and 4563-4600 (QKLRDVSAYSKYLTCPKTKLKISYKDALDRSMVEEGTG). Threonine 4414 bears the Phosphothreonine mark. Threonine 4542 is modified (phosphothreonine; by CDK1). 2 positions are modified to phosphoserine: serine 4610 and serine 4616. Residues 4614–4674 (YYSPYSVSGS…SGYGRRYASG (61 aa)) show a composition bias toward low complexity. Positions 4614-4687 (YYSPYSVSGS…SLGGPESAVA (74 aa)) are disordered. Tyrosine 4618 carries the phosphotyrosine modification. Phosphoserine is present on residues serine 4619, serine 4621, and serine 4625. Threonine 4626 is modified (phosphothreonine). Residues 4628-4643 (GSRTGSRTGSRAGSRR) are 4 X 4 AA tandem repeats of G-S-R-X. Serine 4629 is subject to Phosphoserine. 2 positions are modified to omega-N-methylarginine: arginine 4630 and arginine 4643. Residues serine 4645 and serine 4678 each carry the phosphoserine modification.

Belongs to the plakin or cytolinker family. As to quaternary structure, homodimer or homotetramer. Interacts (via actin-binding domain) with SYNE3. Interacts (via calponin-homology (CH) 1 domain) with VIM (via rod region). Interacts (via N-terminus) with DST isoform 2 (via N-terminus). Interacts with FER. Interacts with TOR1A. Interacts with ANK3. Identified in complexes that contain VIM, EZR, AHNAK, BFSP1, BFSP2, ANK2, PLEC, PRX and spectrin. Phosphorylated by CDK1; regulates dissociation from intermediate filaments during mitosis. Isoform 2 is phosphorylated on Ser-21 and Tyr-26. As to expression, widely expressed with highest expression in skeletal muscle and lowest in thymus.

It localises to the cytoplasm. It is found in the cytoskeleton. The protein resides in the cell junction. Its subcellular location is the hemidesmosome. The protein localises to the cell projection. It localises to the podosome. Functionally, interlinks intermediate filaments with microtubules and microfilaments and anchors intermediate filaments to desmosomes or hemidesmosomes. May be involved not only in the cross-linking and stabilization of cytoskeletal intermediate filaments network, but also in the regulation of their dynamics. This chain is Plectin (Plec), found in Rattus norvegicus (Rat).